The chain runs to 299 residues: Pyridoxal 5'-phosphate synthase subunit PdxS (299 aa).

Asp-29 serves as a coordination point for D-ribose 5-phosphate. Lys-86 functions as the Schiff-base intermediate with D-ribose 5-phosphate in the catalytic mechanism. Position 158 (Gly-158) interacts with D-ribose 5-phosphate. Arg-170 lines the D-glyceraldehyde 3-phosphate pocket. Residues Gly-219 and 240-241 (GS) contribute to the D-ribose 5-phosphate site.

Belongs to the PdxS/SNZ family. As to quaternary structure, in the presence of PdxT, forms a dodecamer of heterodimers.

The catalysed reaction is aldehydo-D-ribose 5-phosphate + D-glyceraldehyde 3-phosphate + L-glutamine = pyridoxal 5'-phosphate + L-glutamate + phosphate + 3 H2O + H(+). It participates in cofactor biosynthesis; pyridoxal 5'-phosphate biosynthesis. In terms of biological role, catalyzes the formation of pyridoxal 5'-phosphate from ribose 5-phosphate (RBP), glyceraldehyde 3-phosphate (G3P) and ammonia. The ammonia is provided by the PdxT subunit. Can also use ribulose 5-phosphate and dihydroxyacetone phosphate as substrates, resulting from enzyme-catalyzed isomerization of RBP and G3P, respectively. The polypeptide is Pyridoxal 5'-phosphate synthase subunit PdxS (Protochlamydia amoebophila (strain UWE25)).